The following is a 1176-amino-acid chain: Leucine--tRNA ligase, cytoplasmic (1176 aa).

L-leucine-binding residues include Tyr52 and Tyr54. The short motif at 60–63 is the 'HIGH' region element; the sequence is HLGH. Phosphoserine is present on Ser167. Positions 260-509 are editing domain; it reads GPQEYTLLKL…DAGDALIYME (250 aa). L-leucine contacts are provided by Leu594 and Ser597. Positions 716–720 match the 'KMSKS' region motif; that stretch reads KMSKS. An ATP-binding site is contributed by Lys719. Ser720 is modified (phosphoserine). Lys970 and Lys1047 each carry N6-acetyllysine.

The protein belongs to the class-I aminoacyl-tRNA synthetase family. Part of the aminoacyl-tRNA synthetase multienzyme complex, also known as multisynthetase complex (MSC), that is composed of the aminoacyl-tRNA ligases for Arg (RARS1), Asp (DARS1), Gln (QARS1), Ile (IARS1), Leu (LARS1), Lys (KARS1), Met (MARS1) the bifunctional ligase for Glu and Pro (EPRS1) and the auxiliary subunits AIMP1/p43, AIMP2/p38 and EEF1E1/p18.

The protein resides in the cytoplasm. The enzyme catalyses tRNA(Leu) + L-leucine + ATP = L-leucyl-tRNA(Leu) + AMP + diphosphate. It catalyses the reaction L-methionyl-tRNA(Leu) + H2O = tRNA(Leu) + L-methionine + H(+). Its activity is regulated as follows. 5-fluoro-1,3-dihydro-1-hydroxy-1,2-benzoxaborole inhibits LARS1 by forming a covalent adduct with the 3' adenosine of tRNA(Leu) at the editing site, thus locking the enzyme in an inactive conformation. Its function is as follows. Aminoacyl-tRNA synthetase that catalyzes the specific attachment of leucine to its cognate tRNA (tRNA(Leu)). It performs tRNA aminoacylation in a two-step reaction: Leu is initially activated by ATP to form a leucyl-adenylate (Leu-AMP) intermediate; then the leucyl moiety is transferred to the acceptor 3' end of the tRNA to yield leucyl-tRNA. To improve the fidelity of catalytic reactions, it is also able to hydrolyze misactivated aminoacyl-adenylate intermediates (pre-transfer editing) and mischarged aminoacyl-tRNAs (post-transfer editing). In Homo sapiens (Human), this protein is Leucine--tRNA ligase, cytoplasmic.